A 217-amino-acid chain; its full sequence is Adenylate kinase (217 aa).

10–15 serves as a coordination point for ATP; the sequence is GAGKGT. The segment at 30–59 is NMP; it reads STGDIFRKNVADDTPLGRLAKQYMDAGDLV. AMP contacts are provided by residues Thr31, Arg36, 57–59, 85–88, and Gln92; these read DLV and GFPR. An LID region spans residues 126–163; sequence GRRTCADCAHVWHVTYDPPTVDGVCDLCGGKLFQREDD. Arg127 provides a ligand contact to ATP. Zn(2+) is bound by residues Cys130, Cys133, Cys150, and Cys153. Arg160 and Arg171 together coordinate AMP. Gly199 is an ATP binding site.

It belongs to the adenylate kinase family. Monomer.

It is found in the cytoplasm. The catalysed reaction is AMP + ATP = 2 ADP. Its pathway is purine metabolism; AMP biosynthesis via salvage pathway; AMP from ADP: step 1/1. In terms of biological role, catalyzes the reversible transfer of the terminal phosphate group between ATP and AMP. Plays an important role in cellular energy homeostasis and in adenine nucleotide metabolism. The sequence is that of Adenylate kinase from Acidothermus cellulolyticus (strain ATCC 43068 / DSM 8971 / 11B).